A 435-amino-acid polypeptide reads, in one-letter code: ATP-dependent protease ATPase subunit HslU (435 aa).

Residues I18, 60-65, D248, E313, and R385 contribute to the ATP site; that span reads GVGKTE.

Belongs to the ClpX chaperone family. HslU subfamily. In terms of assembly, a double ring-shaped homohexamer of HslV is capped on each side by a ring-shaped HslU homohexamer. The assembly of the HslU/HslV complex is dependent on binding of ATP.

It localises to the cytoplasm. Its function is as follows. ATPase subunit of a proteasome-like degradation complex; this subunit has chaperone activity. The binding of ATP and its subsequent hydrolysis by HslU are essential for unfolding of protein substrates subsequently hydrolyzed by HslV. HslU recognizes the N-terminal part of its protein substrates and unfolds these before they are guided to HslV for hydrolysis. This is ATP-dependent protease ATPase subunit HslU from Rhizobium meliloti (strain 1021) (Ensifer meliloti).